The primary structure comprises 102 residues: Protein Tat (102 aa).

Residues 1–24 (MEPVDPRLEPWKHPGSQPKTACNN) are interaction with human CREBBP. A transactivation region spans residues 1–48 (MEPVDPRLEPWKHPGSQPKTACNNCYCKKCCYHCQVCFLTKGLGISYG). The Zn(2+) site is built by Cys-22, Cys-25, and Cys-27. The cysteine-rich stretch occupies residues 22 to 37 (CNNCYCKKCCYHCQVC). N6-acetyllysine; by host PCAF is present on Lys-28. 4 residues coordinate Zn(2+): Cys-30, His-33, Cys-34, and Cys-37. Positions 38 to 48 (FLTKGLGISYG) are core. A disordered region spans residues 48–102 (GRKKRRQRRGPPQGSQTHQVSLSKQPTSQPRGDPTGPKESKEKVERETETDPAVQ). A Nuclear localization signal, RNA-binding (TAR), and protein transduction motif is present at residues 49-57 (RKKRRQRRG). Positions 49-86 (RKKRRQRRGPPQGSQTHQVSLSKQPTSQPRGDPTGPKE) are interaction with the host capping enzyme RNGTT. An N6-acetyllysine; by host EP300 and GCN5L2 mark is found at Lys-50 and Lys-51. An asymmetric dimethylarginine; by host PRMT6 mark is found at Arg-52 and Arg-53. A compositionally biased stretch (polar residues) spans 62-77 (SQTHQVSLSKQPTSQP). Lys-71 is covalently cross-linked (Glycyl lysine isopeptide (Lys-Gly) (interchain with G-Cter in ubiquitin)). Residues 78 to 80 (RGD) carry the Cell attachment site motif. A compositionally biased stretch (basic and acidic residues) spans 83-96 (GPKESKEKVERETE).

It belongs to the lentiviruses Tat family. In terms of assembly, interacts with host CCNT1. Associates with the P-TEFb complex composed at least of Tat, P-TEFb (CDK9 and CCNT1), TAR RNA, RNA Pol II. Recruits the HATs CREBBP, TAF1/TFIID, EP300, PCAF and GCN5L2. Interacts with host KAT5/Tip60; this interaction targets the latter to degradation. Interacts with the host deacetylase SIRT1. Interacts with host capping enzyme RNGTT; this interaction stimulates RNGTT. Binds to host KDR, and to the host integrins ITGAV/ITGB3 and ITGA5/ITGB1. Interacts with host KPNB1/importin beta-1 without previous binding to KPNA1/importin alpha-1. Interacts with EIF2AK2. Interacts with host nucleosome assembly protein NAP1L1; this interaction may be required for the transport of Tat within the nucleus, since the two proteins interact at the nuclear rim. Interacts with host C1QBP/SF2P32; this interaction involves lysine-acetylated Tat. Interacts with the host chemokine receptors CCR2, CCR3 and CXCR4. Interacts with host DPP4/CD26; this interaction may trigger an anti-proliferative effect. Interacts with host LDLR. Interacts with the host extracellular matrix metalloproteinase MMP1. Interacts with host PRMT6; this interaction mediates Tat's methylation. Interacts with, and is ubiquitinated by MDM2/Hdm2. Interacts with host PSMC3 and HTATIP2. Interacts with STAB1; this interaction may overcome SATB1-mediated repression of IL2 and IL2RA (interleukin) in T cells by binding to the same domain than HDAC1. Interacts (when acetylated) with human CDK13, thereby increasing HIV-1 mRNA splicing and promoting the production of the doubly spliced HIV-1 protein Nef. Interacts with host TBP; this interaction modulates the activity of transcriptional pre-initiation complex. Interacts with host RELA. Interacts with host PLSCR1; this interaction negatively regulates Tat transactivation activity by altering its subcellular distribution. In terms of processing, asymmetrical arginine methylation by host PRMT6 seems to diminish the transactivation capacity of Tat and affects the interaction with host CCNT1. Post-translationally, acetylation by EP300, CREBBP, GCN5L2/GCN5 and PCAF regulates the transactivation activity of Tat. EP300-mediated acetylation of Lys-50 promotes dissociation of Tat from the TAR RNA through the competitive binding to PCAF's bromodomain. In addition, the non-acetylated Tat's N-terminus can also interact with PCAF. PCAF-mediated acetylation of Lys-28 enhances Tat's binding to CCNT1. Lys-50 is deacetylated by SIRT1. Polyubiquitination by host MDM2 does not target Tat to degradation, but activates its transactivation function and fosters interaction with CCNT1 and TAR RNA. In terms of processing, phosphorylated by EIF2AK2 on serine and threonine residues adjacent to the basic region important for TAR RNA binding and function. Phosphorylation of Tat by EIF2AK2 is dependent on the prior activation of EIF2AK2 by dsRNA.

The protein localises to the host nucleus. The protein resides in the host nucleolus. It is found in the host cytoplasm. Its subcellular location is the secreted. Transcriptional activator that increases RNA Pol II processivity, thereby increasing the level of full-length viral transcripts. Recognizes a hairpin structure at the 5'-LTR of the nascent viral mRNAs referred to as the transactivation responsive RNA element (TAR) and recruits the cyclin T1-CDK9 complex (P-TEFb complex) that will in turn hyperphosphorylate the RNA polymerase II to allow efficient elongation. The CDK9 component of P-TEFb and other Tat-activated kinases hyperphosphorylate the C-terminus of RNA Pol II that becomes stabilized and much more processive. Other factors such as HTATSF1/Tat-SF1, SUPT5H/SPT5, and HTATIP2 are also important for Tat's function. Besides its effect on RNA Pol II processivity, Tat induces chromatin remodeling of proviral genes by recruiting the histone acetyltransferases (HATs) CREBBP, EP300 and PCAF to the chromatin. This also contributes to the increase in proviral transcription rate, especially when the provirus integrates in transcriptionally silent region of the host genome. To ensure maximal activation of the LTR, Tat mediates nuclear translocation of NF-kappa-B by interacting with host RELA. Through its interaction with host TBP, Tat may also modulate transcription initiation. Tat can reactivate a latently infected cell by penetrating in it and transactivating its LTR promoter. In the cytoplasm, Tat is thought to act as a translational activator of HIV-1 mRNAs. Its function is as follows. Extracellular circulating Tat can be endocytosed by surrounding uninfected cells via the binding to several surface receptors such as CD26, CXCR4, heparan sulfate proteoglycans (HSPG) or LDLR. Neurons are rarely infected, but they internalize Tat via their LDLR. Through its interaction with nuclear HATs, Tat is potentially able to control the acetylation-dependent cellular gene expression. Modulates the expression of many cellular genes involved in cell survival, proliferation or in coding for cytokines or cytokine receptors. Tat plays a role in T-cell and neurons apoptosis. Tat induced neurotoxicity and apoptosis probably contribute to neuroAIDS. Circulating Tat also acts as a chemokine-like and/or growth factor-like molecule that binds to specific receptors on the surface of the cells, affecting many cellular pathways. In the vascular system, Tat binds to ITGAV/ITGB3 and ITGA5/ITGB1 integrins dimers at the surface of endothelial cells and competes with bFGF for heparin-binding sites, leading to an excess of soluble bFGF. The sequence is that of Protein Tat from Human immunodeficiency virus type 1 group M subtype B (isolate RF/HAT3) (HIV-1).